The following is a 357-amino-acid chain: Uroporphyrinogen decarboxylase (357 aa).

Substrate-binding positions include 27–31 (RQAGR), aspartate 77, tyrosine 154, serine 209, and histidine 330.

This sequence belongs to the uroporphyrinogen decarboxylase family. As to quaternary structure, homodimer.

The protein resides in the cytoplasm. The enzyme catalyses uroporphyrinogen III + 4 H(+) = coproporphyrinogen III + 4 CO2. It functions in the pathway porphyrin-containing compound metabolism; protoporphyrin-IX biosynthesis; coproporphyrinogen-III from 5-aminolevulinate: step 4/4. Catalyzes the decarboxylation of four acetate groups of uroporphyrinogen-III to yield coproporphyrinogen-III. The polypeptide is Uroporphyrinogen decarboxylase (Acinetobacter baumannii (strain AB0057)).